The sequence spans 431 residues: Glutamate--tRNA ligase 1 (431 aa).

Positions 6 to 16 (PSPTGDMHIGN) match the 'HIGH' region motif. The 'KMSKS' region signature appears at 235 to 239 (KMSKR). K238 lines the ATP pocket.

Belongs to the class-I aminoacyl-tRNA synthetase family. Glutamate--tRNA ligase type 1 subfamily. In terms of assembly, monomer.

It localises to the cytoplasm. It carries out the reaction tRNA(Glu) + L-glutamate + ATP = L-glutamyl-tRNA(Glu) + AMP + diphosphate. In terms of biological role, catalyzes the attachment of glutamate to tRNA(Glu) in a two-step reaction: glutamate is first activated by ATP to form Glu-AMP and then transferred to the acceptor end of tRNA(Glu). The polypeptide is Glutamate--tRNA ligase 1 (Campylobacter jejuni subsp. jejuni serotype O:2 (strain ATCC 700819 / NCTC 11168)).